An 87-amino-acid chain; its full sequence is Toxin RelG (87 aa).

The protein belongs to the RelE toxin family. Interacts with cognate antitoxin RelF, which neutralizes the toxin. Also interacts with non-cognate antitoxin RelB in vitro, in M.smegmatis this neutralizes the toxicity of this toxin.

Functionally, toxic component of a type II toxin-antitoxin (TA) system. Has RNase activity and preferentially cleaves at the 3'-end of purine ribonucleotides. Overexpression in M.tuberculosis or M.smegmatis inhibits colony formation in a bacteriostatic rather than bacteriocidal fashion. Its toxic effect is neutralized by coexpression with cognate antitoxin RelB2 (shown only for M.smegmatis). Overexpression also increases the number of gentamicin-tolerant and levofloxacin-tolerant persister cells. In combination with cognate antitoxin RelF represses its own promoter. Has been seen to bind DNA in complex with antitoxin RelF but not alone. The protein is Toxin RelG (relG) of Mycobacterium tuberculosis (strain ATCC 25618 / H37Rv).